Here is a 363-residue protein sequence, read N- to C-terminus: MDVGSADAFDRMGTLGVEEEFFVVDDSGQPTAGIQELIYDYNHPPAGVLADRLDHELFQFVIETQTPLLEDVSAVSESVQAVRDALVTHAADHGYRIAAAGLHPTAKWRERNHVEKPRYQSQLDRIQYPQHRNTTAGLHVHVGVDDPDAATWIANELRWYLPPLLALSANSPYWNGFDTGLASARAKIFEALPNTGMPTRFEDFEAYYQLEKRMVETGSIKDRGELWYDVRPHTGHGTVEVRTPDAQADPSVTVAIVEYIHALVMDFAARYADGESGTKVRREILDANKWHAMRYGRDAEFIIPGSMETVTLSEFVDRETNRLGVDGLTTLLAREGGAKKQRRLHASDNIDTLLESLCLDTDT.

The protein belongs to the glutamate--cysteine ligase type 2 family. YbdK subfamily.

The enzyme catalyses L-cysteine + L-glutamate + ATP = gamma-L-glutamyl-L-cysteine + ADP + phosphate + H(+). In terms of biological role, catalyzes the synthesis of gamma-glutamylcysteine (gamma-GC), the main low-molecular-weight thiol compound instead of glutathione in halophilic archaea. The protein is Glutamate--cysteine ligase of Haloquadratum walsbyi (strain DSM 16790 / HBSQ001).